Here is a 479-residue protein sequence, read N- to C-terminus: Ribosomal lysine N-methyltransferase 2 (479 aa).

The SET domain occupies Pro22–Gly325. Tyr324 contacts S-adenosyl-L-methionine.

This sequence belongs to the class V-like SAM-binding methyltransferase superfamily. RKM2 family.

In terms of biological role, S-adenosyl-L-methionine-dependent protein-lysine N-methyltransferase that trimethylates 60S ribosomal protein L12 (RPL12A and RPL12B) at 'Lys-4' and 'Lys-11'. The polypeptide is Ribosomal lysine N-methyltransferase 2 (Saccharomyces cerevisiae (strain ATCC 204508 / S288c) (Baker's yeast)).